A 431-amino-acid polypeptide reads, in one-letter code: Adenylosuccinate synthetase (431 aa).

Residues 12–18 (GDEGKGK) and 40–42 (GHS) each bind GTP. The active-site Proton acceptor is the aspartate 13. 2 residues coordinate Mg(2+): aspartate 13 and glycine 40. IMP-binding positions include 13-16 (DEGK) and 38-41 (NAGH). The active-site Proton donor is histidine 41. The disordered stretch occupies residues 114–133 (QQQERDRSKNGEKIGTTNKG). The span at 115-125 (QQERDRSKNGE) shows a compositional bias: basic and acidic residues. 5 residues coordinate IMP: threonine 130, arginine 144, glutamine 225, threonine 240, and arginine 304. 300-306 (TVTKRPR) is a substrate binding site. GTP contacts are provided by residues arginine 306, 332–334 (CLD), and 414–416 (SIG).

It belongs to the adenylosuccinate synthetase family. In terms of assembly, homodimer. Mg(2+) is required as a cofactor.

It is found in the cytoplasm. It catalyses the reaction IMP + L-aspartate + GTP = N(6)-(1,2-dicarboxyethyl)-AMP + GDP + phosphate + 2 H(+). It functions in the pathway purine metabolism; AMP biosynthesis via de novo pathway; AMP from IMP: step 1/2. Plays an important role in the de novo pathway of purine nucleotide biosynthesis. Catalyzes the first committed step in the biosynthesis of AMP from IMP. This is Adenylosuccinate synthetase from Pediococcus pentosaceus (strain ATCC 25745 / CCUG 21536 / LMG 10740 / 183-1w).